A 411-amino-acid chain; its full sequence is UPF0761 membrane protein PA0951 (411 aa).

Helical transmembrane passes span 36 to 56 (LFAVVPMMTVMFSMLSLIPAF), 92 to 112 (HLTWVGVVFLAVTAFTMLVTI), 132 to 152 (FLLYWAILSLGPLLLGAGFAV), 174 to 194 (LLGLMPLAFSVAAFTLLYSAV), 207 to 229 (GGVFTAVLFEAAKTLFGLYVSLF), and 244 to 264 (IFLLWIYLSWMIVLFGAVLVC).

Belongs to the UPF0761 family.

Its subcellular location is the cell inner membrane. The chain is UPF0761 membrane protein PA0951 from Pseudomonas aeruginosa (strain ATCC 15692 / DSM 22644 / CIP 104116 / JCM 14847 / LMG 12228 / 1C / PRS 101 / PAO1).